Reading from the N-terminus, the 322-residue chain is MTNQTVPPLFPHRHLLGIKGLSPLDILCLLDLADQEIAVSRQPEKKKSVLRGRTQINLFFEASTRTQSSFELAGKRLGADVMNMSVGNSSVKKGETLIDTAMTLNAMQPDILVIRHASAGAAALLAQKVGCSVVNAGDGAHEHPTQALLDALTIRRAKGGIENLIVAICGDVLHSRVARSNILLLNALGARVRVVAPSTLLPSGMADMSVEVFNSMEEGLKDADVVMMLRLQRERMAGSFVPSVREYFRFYGLDKEKLKVAKPDALVMHPGPMNRGVEIASDVADGPQSVIQQQVEMGVAVRMAVMEALLDPRRNPSNGEAA.

2 residues coordinate carbamoyl phosphate: Arg-65 and Thr-66. Lys-93 contacts L-aspartate. The carbamoyl phosphate site is built by Arg-115, His-143, and Gln-146. L-aspartate contacts are provided by Arg-176 and Arg-230. Positions 271 and 272 each coordinate carbamoyl phosphate.

Belongs to the aspartate/ornithine carbamoyltransferase superfamily. ATCase family. As to quaternary structure, heterododecamer (2C3:3R2) of six catalytic PyrB chains organized as two trimers (C3), and six regulatory PyrI chains organized as three dimers (R2).

It carries out the reaction carbamoyl phosphate + L-aspartate = N-carbamoyl-L-aspartate + phosphate + H(+). It functions in the pathway pyrimidine metabolism; UMP biosynthesis via de novo pathway; (S)-dihydroorotate from bicarbonate: step 2/3. Functionally, catalyzes the condensation of carbamoyl phosphate and aspartate to form carbamoyl aspartate and inorganic phosphate, the committed step in the de novo pyrimidine nucleotide biosynthesis pathway. This is Aspartate carbamoyltransferase catalytic subunit from Brucella anthropi (strain ATCC 49188 / DSM 6882 / CCUG 24695 / JCM 21032 / LMG 3331 / NBRC 15819 / NCTC 12168 / Alc 37) (Ochrobactrum anthropi).